Reading from the N-terminus, the 849-residue chain is G-type lectin S-receptor-like serine/threonine-protein kinase At4g11900 (849 aa).

Residues 1-26 (MQICKKNVFLLYYGVLVFLSFQVSSS) form the signal peptide. The Bulb-type lectin domain occupies 27-180 (TDTISTNQPL…PNSSAAVLWQ (154 aa)). Residues 27–466 (TDTISTNQPL…RKTEHSKGKS (440 aa)) are Extracellular-facing. N-linked (GlcNAc...) asparagine glycosylation is found at Asn111, Asn148, Asn172, and Asn232. An EGF-like domain is found at 311–348 (PDNRCDVYNSCGSFGICNENREPPPCRCVPGFKREFSQ). Cystine bridges form between Cys315–Cys327, Cys321–Cys336, Cys401–Cys421, and Cys405–Cys411. The PAN domain maps to 368–447 (CYKRNDEFLP…KGHTFFLRLA (80 aa)). The N-linked (GlcNAc...) asparagine glycan is linked to Asn450. Residues 467-487 (IVLPLVLASLVATAACFVGLY) form a helical membrane-spanning segment. Residues 488–849 (CCISSRIRRK…EATQTELEAR (362 aa)) are Cytoplasmic-facing. The Protein kinase domain occupies 537-822 (FSRKKKLGEG…TLPIPKQPTF (286 aa)). ATP-binding positions include 543–551 (LGEGGFGPV) and Lys565. Phosphoserine is present on Ser571. Residues 626 to 643 (LKSRELDWETRMKIVNGT) form a caM-binding region. Asp662 (proton acceptor) is an active-site residue. Ser666 and Ser679 each carry phosphoserine. Thr696 is modified (phosphothreonine). A Phosphoserine modification is found at Ser837. Thr844 is subject to Phosphothreonine.

It belongs to the protein kinase superfamily. Ser/Thr protein kinase family.

The protein localises to the cell membrane. It catalyses the reaction L-seryl-[protein] + ATP = O-phospho-L-seryl-[protein] + ADP + H(+). The catalysed reaction is L-threonyl-[protein] + ATP = O-phospho-L-threonyl-[protein] + ADP + H(+). The sequence is that of G-type lectin S-receptor-like serine/threonine-protein kinase At4g11900 from Arabidopsis thaliana (Mouse-ear cress).